The chain runs to 444 residues: Tol-Pal system protein TolB (444 aa).

The N-terminal stretch at M1–A19 is a signal peptide.

The protein belongs to the TolB family. As to quaternary structure, the Tol-Pal system is composed of five core proteins: the inner membrane proteins TolA, TolQ and TolR, the periplasmic protein TolB and the outer membrane protein Pal. They form a network linking the inner and outer membranes and the peptidoglycan layer.

The protein localises to the periplasm. Functionally, part of the Tol-Pal system, which plays a role in outer membrane invagination during cell division and is important for maintaining outer membrane integrity. The protein is Tol-Pal system protein TolB of Rickettsia africae (strain ESF-5).